We begin with the raw amino-acid sequence, 312 residues long: Nucleosome assembly protein 1-like 4 (312 aa).

Positions 24–78 (VETLKNKLQALAEQHVDVLESLAPSVRKRVDVLMEIQSQHDELEVKFFEEKAALE) form a coiled coil. Positions 45–60 (LAPSVRKRVDVLMEIQ) match the Nuclear export signal motif. The disordered stretch occupies residues 289 to 312 (DYGASWVDDEEEDDNNDEYSDEEA).

The protein belongs to the nucleosome assembly protein (NAP) family.

It localises to the nucleus. The protein localises to the cytoplasm. Its function is as follows. May modulate chromatin structure by regulation of nucleosome assembly/disassembly. The sequence is that of Nucleosome assembly protein 1-like 4 from Oryza sativa subsp. japonica (Rice).